Consider the following 111-residue polypeptide: Ribonuclease P protein component (111 aa).

Belongs to the RnpA family. In terms of assembly, consists of a catalytic RNA component (M1 or rnpB) and a protein subunit.

The catalysed reaction is Endonucleolytic cleavage of RNA, removing 5'-extranucleotides from tRNA precursor.. Functionally, RNaseP catalyzes the removal of the 5'-leader sequence from pre-tRNA to produce the mature 5'-terminus. It can also cleave other RNA substrates such as 4.5S RNA. The protein component plays an auxiliary but essential role in vivo by binding to the 5'-leader sequence and broadening the substrate specificity of the ribozyme. The sequence is that of Ribonuclease P protein component from Fusobacterium nucleatum subsp. nucleatum (strain ATCC 25586 / DSM 15643 / BCRC 10681 / CIP 101130 / JCM 8532 / KCTC 2640 / LMG 13131 / VPI 4355).